Here is a 102-residue protein sequence, read N- to C-terminus: NADH-quinone oxidoreductase subunit K (102 aa).

3 consecutive transmembrane segments (helical) span residues 5–25 (LSHYLTVSAILFTLGVFGIFL), 31–51 (IVILMSIELILLAVNINMVAF), and 65–85 (LFILTVAAAEAAIGLAILVVF).

Belongs to the complex I subunit 4L family. In terms of assembly, NDH-1 is composed of 14 different subunits. Subunits NuoA, H, J, K, L, M, N constitute the membrane sector of the complex.

The protein resides in the cell inner membrane. The catalysed reaction is a quinone + NADH + 5 H(+)(in) = a quinol + NAD(+) + 4 H(+)(out). Its function is as follows. NDH-1 shuttles electrons from NADH, via FMN and iron-sulfur (Fe-S) centers, to quinones in the respiratory chain. The immediate electron acceptor for the enzyme in this species is believed to be ubiquinone. Couples the redox reaction to proton translocation (for every two electrons transferred, four hydrogen ions are translocated across the cytoplasmic membrane), and thus conserves the redox energy in a proton gradient. This is NADH-quinone oxidoreductase subunit K from Rhizobium johnstonii (strain DSM 114642 / LMG 32736 / 3841) (Rhizobium leguminosarum bv. viciae).